The primary structure comprises 352 residues: tRNA pseudouridine synthase D (352 aa).

Asp-81 serves as the catalytic Nucleophile. A TRUD domain is found at 157–303; the sequence is GVPNYFGTQR…MDHERRILRL (147 aa).

Belongs to the pseudouridine synthase TruD family.

It catalyses the reaction uridine(13) in tRNA = pseudouridine(13) in tRNA. Its function is as follows. Responsible for synthesis of pseudouridine from uracil-13 in transfer RNAs. This is tRNA pseudouridine synthase D from Pseudomonas putida (strain GB-1).